Here is a 480-residue protein sequence, read N- to C-terminus: UDP-N-acetylmuramate--L-alanine ligase (480 aa).

122-128 serves as a coordination point for ATP; the sequence is GTHGKTT.

It belongs to the MurCDEF family.

The protein localises to the cytoplasm. It carries out the reaction UDP-N-acetyl-alpha-D-muramate + L-alanine + ATP = UDP-N-acetyl-alpha-D-muramoyl-L-alanine + ADP + phosphate + H(+). It functions in the pathway cell wall biogenesis; peptidoglycan biosynthesis. Its function is as follows. Cell wall formation. This Pseudomonas aeruginosa (strain LESB58) protein is UDP-N-acetylmuramate--L-alanine ligase.